Here is a 373-residue protein sequence, read N- to C-terminus: Chaperone protein DnaJ (373 aa).

In terms of domain architecture, J spans 5 to 70 (DYYEVLGVNR…QKRAAYDQYG (66 aa)). A CR-type zinc finger spans residues 133-211 (GTETKIRIPV…CHGGGRVKQH (79 aa)). Cys146, Cys149, Cys163, Cys166, Cys185, Cys188, Cys199, and Cys202 together coordinate Zn(2+). CXXCXGXG motif repeat units lie at residues 146–153 (CETCHGSG), 163–170 (CSTCGGHG), 185–192 (CPKCHGSG), and 199–206 (CPTCHGGG). The tract at residues 346 to 373 (LEDINQQDSGKHSPREKSWMTKVKDFFQ) is disordered. Basic and acidic residues predominate over residues 354–373 (SGKHSPREKSWMTKVKDFFQ).

Belongs to the DnaJ family. As to quaternary structure, homodimer. Zn(2+) serves as cofactor.

The protein resides in the cytoplasm. Participates actively in the response to hyperosmotic and heat shock by preventing the aggregation of stress-denatured proteins and by disaggregating proteins, also in an autonomous, DnaK-independent fashion. Unfolded proteins bind initially to DnaJ; upon interaction with the DnaJ-bound protein, DnaK hydrolyzes its bound ATP, resulting in the formation of a stable complex. GrpE releases ADP from DnaK; ATP binding to DnaK triggers the release of the substrate protein, thus completing the reaction cycle. Several rounds of ATP-dependent interactions between DnaJ, DnaK and GrpE are required for fully efficient folding. Also involved, together with DnaK and GrpE, in the DNA replication of plasmids through activation of initiation proteins. In Methylobacillus flagellatus (strain ATCC 51484 / DSM 6875 / VKM B-1610 / KT), this protein is Chaperone protein DnaJ.